Here is a 134-residue protein sequence, read N- to C-terminus: Replication enhancer protein (134 aa).

This sequence belongs to the geminiviridae replication enhancer protein family. As to quaternary structure, homooligomer. Interacts with the replication-associated protein (REP). Interacts with host proliferating cell nuclear antigen (PCNA). Interacts with host retinoblastoma-related protein 1 (RBR1), and may thereby deregulate the host cell cycle. Oligomerization and interaction with PCNA are necessary for optimal replication enhancement.

In terms of biological role, increases viral DNA accumulation. Enhances infectivity and symptom expression. The protein is Replication enhancer protein of Tomato yellow leaf curl Sardinia virus (TYLCSV).